We begin with the raw amino-acid sequence, 56 residues long: Putative zinc-binding protein YnfU (56 aa).

The Zn(2+) site is built by Cys-19, Cys-22, Cys-41, and Cys-44.

The cofactor is Zn(2+).

The protein is Putative zinc-binding protein YnfU of Escherichia coli (strain K12).